Consider the following 366-residue polypeptide: Spore germination protein GerM (366 aa).

2 disordered regions span residues 42–72 (TFVN…KADQ) and 346–366 (EKGE…TGSF). Over residues 58–69 (KKTESEKSDTAK) the composition is skewed to basic and acidic residues. Positions 357 to 366 (RPSQVNTGSF) are enriched in polar residues.

Unknown. Affects both sporulation and germination. This is Spore germination protein GerM (gerM) from Bacillus subtilis (strain 168).